Consider the following 354-residue polypeptide: Rhodopsin (354 aa).

Residues 1-36 lie on the Extracellular side of the membrane; the sequence is MNGTEGPYFYIPMLNTTGVVRSPYEYPQYYLVNPAA. 2 N-linked (GlcNAc...) asparagine glycosylation sites follow: Asn2 and Asn15. A helical membrane pass occupies residues 37-61; the sequence is YAVLGAYMFFLILVGFPINFLTLYV. Residues 62–73 are Cytoplasmic-facing; that stretch reads TIEHKKLRTPLN. The helical transmembrane segment at 74–96 threads the bilayer; sequence YILLNLAVADLFMVFGGFTTTIY. Residues 97 to 110 lie on the Extracellular side of the membrane; the sequence is TSMHGYFVLGRLGC. A disulfide bridge connects residues Cys110 and Cys187. A helical transmembrane segment spans residues 111–133; it reads NVEGFSATLGGEIALWSLVVLAI. Positions 134–136 match the 'Ionic lock' involved in activated form stabilization motif; sequence ERW. Residues 134-152 lie on the Cytoplasmic side of the membrane; sequence ERWVVVCKPISNFRFGENH. Residues 153 to 173 form a helical membrane-spanning segment; sequence AIMGVAFTWFMAAACAVPPLF. At 174-202 the chain is on the extracellular side; sequence GWSRYIPEGMQCSCGIDYYTRAEGFNNES. An N-linked (GlcNAc...) asparagine glycan is attached at Asn200. The helical transmembrane segment at 203 to 224 threads the bilayer; it reads FVIYMFTCHFCIPLMVVFFCYG. Over 225–252 the chain is Cytoplasmic; the sequence is RLVCAVKEAAAAQQESETTQRAEREVTR. Residues 253–274 form a helical membrane-spanning segment; the sequence is MVIIMVVSFLVSWVPYASVAWY. Over 275–286 the chain is Extracellular; that stretch reads IFTHQGSEFGPL. Residues 287 to 308 traverse the membrane as a helical segment; it reads FMTIPAFFAKSSSIYNPMIYIC. Position 296 is an N6-(retinylidene)lysine (Lys296). Residues 309-354 are Cytoplasmic-facing; sequence MNKQFRHCMITTLCCGKNPFEEEEGASSTASKTEASSVSSSSVSPA. Residues Cys322 and Cys323 are each lipidated (S-palmitoyl cysteine). Positions 329–354 are disordered; it reads EEEEGASSTASKTEASSVSSSSVSPA. The span at 334 to 354 shows a compositional bias: low complexity; that stretch reads ASSTASKTEASSVSSSSVSPA.

It belongs to the G-protein coupled receptor 1 family. Opsin subfamily. Post-translationally, phosphorylated on some or all of the serine and threonine residues present in the C-terminal region. Contains one covalently linked retinal chromophore.

Its subcellular location is the membrane. It localises to the cell projection. It is found in the cilium. The protein resides in the photoreceptor outer segment. Photoreceptor required for image-forming vision at low light intensity. While most salt water fish species use retinal as chromophore, most freshwater fish use 3-dehydroretinal, or a mixture of retinal and 3-dehydroretinal. Light-induced isomerization of 11-cis to all-trans retinal triggers a conformational change that activates signaling via G-proteins. Subsequent receptor phosphorylation mediates displacement of the bound G-protein alpha subunit by arrestin and terminates signaling. In Atherina boyeri (Big-scale sand smelt), this protein is Rhodopsin (rho).